A 474-amino-acid polypeptide reads, in one-letter code: 3-isopropylmalate dehydratase large subunit (474 aa).

3 residues coordinate [4Fe-4S] cluster: C353, C413, and C416.

Belongs to the aconitase/IPM isomerase family. LeuC type 1 subfamily. Heterodimer of LeuC and LeuD. The cofactor is [4Fe-4S] cluster.

The enzyme catalyses (2R,3S)-3-isopropylmalate = (2S)-2-isopropylmalate. It functions in the pathway amino-acid biosynthesis; L-leucine biosynthesis; L-leucine from 3-methyl-2-oxobutanoate: step 2/4. Functionally, catalyzes the isomerization between 2-isopropylmalate and 3-isopropylmalate, via the formation of 2-isopropylmaleate. This Roseiflexus sp. (strain RS-1) protein is 3-isopropylmalate dehydratase large subunit.